Reading from the N-terminus, the 315-residue chain is MTTVVKHFLRDDDLTPAQQAEVLELAARLKKAPFAERPLEGPRGVGVIFEKNSTRTRFSFEMGIAQLGGHAIVVDGRSTQLGREETLQDTGRVLSRYVDAVVWRTFGQKRLEAMASGADVPIVNALSDEFHPCQVLADLQTLVERKGSLKGLKLTYLGDGANNMAHSLMLGGVTAGVDVTIASPEGFAPLPWVVEAARARAAETGATITLTGDPQTAVVGADALVTDTWTSMGQENDGLDRVGPFRPFQINEALLAKADADAVVLHCLPAHRGEEITDEVLDGPQSVVWDEAENRLHAQKALLVWLLAQRTGDRP.

Carbamoyl phosphate is bound by residues 53–56 (STRT), Gln80, Arg104, and 131–134 (HPCQ). L-ornithine-binding positions include Asn163, Asp227, and 231-232 (SM). Residues 267–268 (CL) and Arg295 each bind carbamoyl phosphate.

It belongs to the aspartate/ornithine carbamoyltransferase superfamily. OTCase family.

It is found in the cytoplasm. It carries out the reaction carbamoyl phosphate + L-ornithine = L-citrulline + phosphate + H(+). The protein operates within amino-acid biosynthesis; L-arginine biosynthesis; L-arginine from L-ornithine and carbamoyl phosphate: step 1/3. Reversibly catalyzes the transfer of the carbamoyl group from carbamoyl phosphate (CP) to the N(epsilon) atom of ornithine (ORN) to produce L-citrulline. In Rhodococcus jostii (strain RHA1), this protein is Ornithine carbamoyltransferase.